The chain runs to 558 residues: SPATS2-like protein (558 aa).

A2 carries the N-acetylalanine modification. Residues 63-79 (GKKKNNKRKRSKSKQHQ) show a composition bias toward basic residues. 2 disordered regions span residues 63 to 148 (GKKK…RGIT) and 161 to 202 (DGNP…SNAP). Basic and acidic residues-rich tracts occupy residues 80 to 92 (GNKD…ERPE) and 110 to 142 (GCEK…EPPR). A Phosphoserine modification is found at S120. Residues 279–344 (KEEAMDILTA…ARFSCDIEQL (66 aa)) are a coiled coil. The segment at 383–514 (KQGNFSRKSS…SEKARRRQHA (132 aa)) is disordered. The segment covering 416 to 433 (DACQQTMPTNKQQNGPSN) has biased composition (polar residues). Position 455 is a phosphoserine (S455). Residues 469 to 485 (HEHRRQPHNGFRPKNKG) are compositionally biased toward basic residues.

This sequence belongs to the SPATS2 family.

It localises to the cytoplasm. Its subcellular location is the nucleus. The protein resides in the nucleolus. The sequence is that of SPATS2-like protein (Spats2l) from Rattus norvegicus (Rat).